Reading from the N-terminus, the 138-residue chain is MARVTVEDCVLKIPNRFELVLVAGQRARDISAGSALTVDRDNDKNPVVSLREIADGTVDIPNLKEAVIQGLQKHVEIDEPEEDDFDAMGLDRDLMPGVALAEDDDTLEADGLTIHDGADSDLDLSDDAGQDTDEADED.

The disordered stretch occupies residues 101–138; it reads AEDDDTLEADGLTIHDGADSDLDLSDDAGQDTDEADED. The segment covering 119–138 has biased composition (acidic residues); that stretch reads DSDLDLSDDAGQDTDEADED.

This sequence belongs to the RNA polymerase subunit omega family. As to quaternary structure, the RNAP catalytic core consists of 2 alpha, 1 beta, 1 beta' and 1 omega subunit. When a sigma factor is associated with the core the holoenzyme is formed, which can initiate transcription.

The enzyme catalyses RNA(n) + a ribonucleoside 5'-triphosphate = RNA(n+1) + diphosphate. Functionally, promotes RNA polymerase assembly. Latches the N- and C-terminal regions of the beta' subunit thereby facilitating its interaction with the beta and alpha subunits. The chain is DNA-directed RNA polymerase subunit omega from Rhodospirillum rubrum (strain ATCC 11170 / ATH 1.1.1 / DSM 467 / LMG 4362 / NCIMB 8255 / S1).